The following is a 157-amino-acid chain: MVKAVFPGSFDPLTFGHLDVISRSALLFDQVIVAVGINTSKTAMFTTEEKITLISNNTKNLKNVSVLPMPDLTFKFVSSVGADVIVRGIRNVRDYEYERDIAEINHRLGNVDTVLLPSKAVYQDISSSNLKEVAKFGADISHFVPENVIKLIKLKTK.

A substrate-binding site is contributed by serine 9. ATP-binding positions include 9–10 (SF) and histidine 17. Substrate-binding residues include lysine 41, threonine 73, and arginine 87. ATP contacts are provided by residues 88-90 (GIR), glutamate 98, and 122-128 (YQDISSS).

It belongs to the bacterial CoaD family. As to quaternary structure, homohexamer. The cofactor is Mg(2+).

It is found in the cytoplasm. The catalysed reaction is (R)-4'-phosphopantetheine + ATP + H(+) = 3'-dephospho-CoA + diphosphate. It functions in the pathway cofactor biosynthesis; coenzyme A biosynthesis; CoA from (R)-pantothenate: step 4/5. In terms of biological role, reversibly transfers an adenylyl group from ATP to 4'-phosphopantetheine, yielding dephospho-CoA (dPCoA) and pyrophosphate. The protein is Phosphopantetheine adenylyltransferase of Oenococcus oeni (strain ATCC BAA-331 / PSU-1).